We begin with the raw amino-acid sequence, 100 residues long: Cysteine-rich venom protein VAR1 (100 aa).

The signal sequence occupies residues Met1–Ser22. An SCP domain is found at Asn41–Glu81.

This sequence belongs to the CRISP family. In terms of processing, contains 8 disulfide bonds. As to expression, expressed by the venom gland.

It localises to the secreted. In terms of biological role, blocks ryanodine receptors, and potassium channels. The sequence is that of Cysteine-rich venom protein VAR1 from Varanus acanthurus (Ridge-tailed monitor).